Reading from the N-terminus, the 611-residue chain is RAC serine/threonine-protein kinase (611 aa).

Over residues 14 to 25 (VVASAPAPGSAS) the composition is skewed to low complexity. Disordered regions lie at residues 14-33 (VVAS…SPTT) and 45-88 (QSTH…NTTF). S30 is modified (phosphoserine). Residues 106–211 (QVVKEGWLMK…WTEAIRNVSS (106 aa)) enclose the PH domain. Residues 266 to 523 (FEFLKVLGKG…VKEIQAHPFF (258 aa)) enclose the Protein kinase domain. ATP is bound by residues 272–280 (LGKGTFGKV) and K295. The Proton acceptor role is filled by D389. The 74-residue stretch at 524–597 (ASINWTDLVL…QGDMASTLGT (74 aa)) folds into the AGC-kinase C-terminal domain. Position 586 is a phosphoserine (S586).

The protein belongs to the protein kinase superfamily. AGC Ser/Thr protein kinase family. RAC subfamily. As to quaternary structure, interacts with trbl. Post-translationally, phosphorylated and activated by Pk61C/PDK1. Phosphorylated on Ser-586 by the TORC2 complex. As to expression, ubiquitously expressed. Present in ovary, where it is concentrated at the basal side of follicle cells.

The protein localises to the cytoplasm. It is found in the cytosol. Its subcellular location is the cell membrane. It catalyses the reaction L-seryl-[protein] + ATP = O-phospho-L-seryl-[protein] + ADP + H(+). It carries out the reaction L-threonyl-[protein] + ATP = O-phospho-L-threonyl-[protein] + ADP + H(+). In terms of biological role, serine/threonine kinase involved in various developmental processes. During early embryogenesis, acts as a survival protein. During mid-embryogenesis, phosphorylates and activates trh, a transcription factor required for tracheal cell fate determination. Also regulates tracheal cell migration. Later in development, acts downstream of PI3K and Pk61C/PDK1 in the insulin receptor transduction pathway which regulates cell growth and organ size, by phosphorylating and antagonizing FOXO transcription factor. Controls follicle cell size during oogenesis. May also stimulate cell growth by phosphorylating Gig/Tsc2 and inactivating the Tsc complex. Dephosphorylation of 'Ser-586' by Phlpp triggers apoptosis and suppression of tumor growth. The chain is RAC serine/threonine-protein kinase from Drosophila melanogaster (Fruit fly).